The following is a 126-amino-acid chain: Large ribosomal subunit protein bL12 (126 aa).

The segment covering 107–116 (EDAEKAKSQL) has biased composition (basic and acidic residues). The segment at 107-126 (EDAEKAKSQLEEAGATVELK) is disordered.

Belongs to the bacterial ribosomal protein bL12 family. As to quaternary structure, homodimer. Part of the ribosomal stalk of the 50S ribosomal subunit. Forms a multimeric L10(L12)X complex, where L10 forms an elongated spine to which 2 to 4 L12 dimers bind in a sequential fashion. Binds GTP-bound translation factors.

In terms of biological role, forms part of the ribosomal stalk which helps the ribosome interact with GTP-bound translation factors. Is thus essential for accurate translation. This Bifidobacterium adolescentis (strain ATCC 15703 / DSM 20083 / NCTC 11814 / E194a) protein is Large ribosomal subunit protein bL12.